Reading from the N-terminus, the 314-residue chain is DNA-directed RNA polymerase subunit alpha (314 aa).

Residues 1–228 (MIEIEKPKIE…EHLNIFVGLT (228 aa)) are alpha N-terminal domain (alpha-NTD). Positions 246 to 314 (EKVLEMTIEE…ELGLGLRKDD (69 aa)) are alpha C-terminal domain (alpha-CTD).

It belongs to the RNA polymerase alpha chain family. As to quaternary structure, homodimer. The RNAP catalytic core consists of 2 alpha, 1 beta, 1 beta' and 1 omega subunit. When a sigma factor is associated with the core the holoenzyme is formed, which can initiate transcription.

It carries out the reaction RNA(n) + a ribonucleoside 5'-triphosphate = RNA(n+1) + diphosphate. Its function is as follows. DNA-dependent RNA polymerase catalyzes the transcription of DNA into RNA using the four ribonucleoside triphosphates as substrates. This chain is DNA-directed RNA polymerase subunit alpha, found in Bacillus velezensis (strain DSM 23117 / BGSC 10A6 / LMG 26770 / FZB42) (Bacillus amyloliquefaciens subsp. plantarum).